A 563-amino-acid chain; its full sequence is Delta-1-pyrroline-5-carboxylate dehydrogenase, mitochondrial (563 aa).

The transit peptide at 1–23 directs the protein to the mitochondrion; that stretch reads MLPPALLRRSLLSYAWRGSGLRW. K30 bears the N6-succinyllysine mark. Phosphoserine is present on S43. The residue at position 51 (K51) is an N6-acetyllysine. N6-acetyllysine; alternate is present on residues K92, K98, K113, K129, and K174. N6-succinyllysine; alternate is present on residues K92, K98, K113, K129, and K174. Residues S207, K232, and 285–289 each bind NAD(+); that span reads GSVPT. Catalysis depends on E313, which acts as the Proton acceptor. The residue at position 317 (K317) is an N6-acetyllysine. Residue K346 is modified to N6-succinyllysine. Catalysis depends on C347, which acts as the Nucleophile. Residues K364 and K375 each carry the N6-acetyllysine modification. K394 is modified (N6-succinyllysine). E446 is an NAD(+) binding site. N6-acetyllysine is present on K461. K508 carries the N6-acetyllysine; alternate modification. K508 carries the post-translational modification N6-succinyllysine; alternate. S512 lines the substrate pocket.

The protein belongs to the aldehyde dehydrogenase family. Homodimer.

It is found in the mitochondrion matrix. The enzyme catalyses L-glutamate 5-semialdehyde + NAD(+) + H2O = L-glutamate + NADH + 2 H(+). It functions in the pathway amino-acid degradation; L-proline degradation into L-glutamate; L-glutamate from L-proline: step 2/2. Irreversible conversion of delta-1-pyrroline-5-carboxylate (P5C), derived either from proline or ornithine, to glutamate. This is a necessary step in the pathway interconnecting the urea and tricarboxylic acid cycles. The preferred substrate is glutamic gamma-semialdehyde, other substrates include succinic, glutaric and adipic semialdehydes. In Rattus norvegicus (Rat), this protein is Delta-1-pyrroline-5-carboxylate dehydrogenase, mitochondrial (Aldh4a1).